A 391-amino-acid chain; its full sequence is Decapping nuclease RAI1 (391 aa).

An a divalent metal cation-binding site is contributed by glutamate 174. Glutamate 223 lines the substrate pocket. Positions 225, 244, and 245 each coordinate a divalent metal cation. Substrate is bound by residues lysine 246 and glutamine 270.

It belongs to the DXO/Dom3Z family. As to quaternary structure, interacts with RAT1; the interaction is direct, stabilizes RAT1 protein structure and stimulates its exoribonuclease activity. The interaction also stimulates RAI1 pyrophosphohydrolase activity, probably by recruiting it to mRNA substrates. Requires a divalent metal cation as cofactor.

It localises to the nucleus. The enzyme catalyses a 5'-end NAD(+)-phospho-ribonucleoside in mRNA + H2O = a 5'-end phospho-ribonucleoside in mRNA + NAD(+) + H(+). It catalyses the reaction a 5'-end (N(7)-methyl 5'-triphosphoguanosine)-ribonucleoside-ribonucleotide in mRNA + H2O = a (N(7)-methyl 5'-triphosphoguanosine)-nucleoside + a 5'-end phospho-ribonucleoside in mRNA + H(+). The catalysed reaction is a 5'-end triphospho-ribonucleoside in mRNA + H2O = a 5'-end phospho-ribonucleoside in mRNA + diphosphate + H(+). Its function is as follows. Decapping enzyme for NAD-capped RNAs: specifically hydrolyzes the nicotinamide adenine dinucleotide (NAD) cap from a subset of RNAs by removing the entire NAD moiety from the 5'-end of an NAD-capped RNA. The NAD-cap is present at the 5'-end of some RNAs and snoRNAs. In contrast to the canonical 5'-end N7 methylguanosine (m7G) cap, the NAD cap promotes mRNA decay. Also acts as a non-canonical decapping enzyme that removes the entire cap structure of m7G capped or incompletely capped RNAs. Has decapping activity toward incomplete 5'-end m7G cap mRNAs such as unmethylated 5'-end-capped RNA (cap0), while it has no activity toward 2'-O-ribose methylated m7G cap (cap1). Also possesses RNA 5'-pyrophosphohydrolase activity by hydrolyzing the 5'-end triphosphate to release pyrophosphates. Stimulates exoribonuclease activity of Rat1, allowing it to degrade RNAs with stable secondary structure more effectively. In Candida albicans (strain SC5314 / ATCC MYA-2876) (Yeast), this protein is Decapping nuclease RAI1.